The chain runs to 879 residues: Alanine--tRNA ligase (879 aa).

Zn(2+) is bound by residues His566, His570, Cys668, and His672.

Belongs to the class-II aminoacyl-tRNA synthetase family. Zn(2+) is required as a cofactor.

The protein resides in the cytoplasm. It carries out the reaction tRNA(Ala) + L-alanine + ATP = L-alanyl-tRNA(Ala) + AMP + diphosphate. Catalyzes the attachment of alanine to tRNA(Ala) in a two-step reaction: alanine is first activated by ATP to form Ala-AMP and then transferred to the acceptor end of tRNA(Ala). Also edits incorrectly charged Ser-tRNA(Ala) and Gly-tRNA(Ala) via its editing domain. This chain is Alanine--tRNA ligase, found in Clostridium kluyveri (strain ATCC 8527 / DSM 555 / NBRC 12016 / NCIMB 10680 / K1).